A 612-amino-acid chain; its full sequence is Alpha-glycerophosphate oxidase (612 aa).

21-49 is a binding site for FAD; that stretch reads DLLIIGGGITGAGVALQAAASGLDTGLIE. Residues 398-408 are compositionally biased toward basic and acidic residues; it reads VETSTSEKELD. Residues 398–418 are disordered; it reads VETSTSEKELDPSAVSRGSSF.

This sequence belongs to the FAD-dependent glycerol-3-phosphate dehydrogenase family. The cofactor is FAD.

The protein resides in the cytoplasm. The catalysed reaction is sn-glycerol 3-phosphate + O2 = dihydroxyacetone phosphate + H2O2. This Streptococcus pyogenes serotype M18 (strain MGAS8232) protein is Alpha-glycerophosphate oxidase (glpO).